A 265-amino-acid chain; its full sequence is uncharacterized protein (265 aa).

Glutamate 47 provides a ligand contact to thiamine diphosphate. A thiamine pyrophosphate binding region spans residues 204 to 247; it reads QHQMWLVQHILRVARHCGFTVTTMEMTLIETQVRLKITVKSDRT.

This sequence belongs to the TPP enzyme family. Mg(2+) serves as cofactor. Thiamine diphosphate is required as a cofactor.

In terms of biological role, truncated acetolactase synthase; no longer catalytically active. This is an uncharacterized protein from Haemophilus influenzae (strain ATCC 51907 / DSM 11121 / KW20 / Rd).